The sequence spans 457 residues: Siroheme synthase (457 aa).

The interval 1 to 204 (MDHLPIFCQL…NDQKAITETT (204 aa)) is precorrin-2 dehydrogenase /sirohydrochlorin ferrochelatase. NAD(+)-binding positions include 22 to 23 (DV) and 43 to 44 (LA). The residue at position 128 (serine 128) is a Phosphoserine. Residues 216 to 457 (GEVVLVGAGP…RDKLNWFSNH (242 aa)) are uroporphyrinogen-III C-methyltransferase. Residue proline 225 participates in S-adenosyl-L-methionine binding. Aspartate 248 serves as the catalytic Proton acceptor. Lysine 270 (proton donor) is an active-site residue. S-adenosyl-L-methionine is bound by residues 301–303 (GGD), isoleucine 306, 331–332 (TA), methionine 382, and glycine 411.

The protein in the N-terminal section; belongs to the precorrin-2 dehydrogenase / sirohydrochlorin ferrochelatase family. This sequence in the C-terminal section; belongs to the precorrin methyltransferase family.

It carries out the reaction uroporphyrinogen III + 2 S-adenosyl-L-methionine = precorrin-2 + 2 S-adenosyl-L-homocysteine + H(+). It catalyses the reaction precorrin-2 + NAD(+) = sirohydrochlorin + NADH + 2 H(+). The catalysed reaction is siroheme + 2 H(+) = sirohydrochlorin + Fe(2+). It participates in cofactor biosynthesis; adenosylcobalamin biosynthesis; precorrin-2 from uroporphyrinogen III: step 1/1. The protein operates within cofactor biosynthesis; adenosylcobalamin biosynthesis; sirohydrochlorin from precorrin-2: step 1/1. It functions in the pathway porphyrin-containing compound metabolism; siroheme biosynthesis; precorrin-2 from uroporphyrinogen III: step 1/1. Its pathway is porphyrin-containing compound metabolism; siroheme biosynthesis; siroheme from sirohydrochlorin: step 1/1. It participates in porphyrin-containing compound metabolism; siroheme biosynthesis; sirohydrochlorin from precorrin-2: step 1/1. In terms of biological role, multifunctional enzyme that catalyzes the SAM-dependent methylations of uroporphyrinogen III at position C-2 and C-7 to form precorrin-2 via precorrin-1. Then it catalyzes the NAD-dependent ring dehydrogenation of precorrin-2 to yield sirohydrochlorin. Finally, it catalyzes the ferrochelation of sirohydrochlorin to yield siroheme. This Escherichia coli O8 (strain IAI1) protein is Siroheme synthase.